Reading from the N-terminus, the 475-residue chain is Putative poly(A) polymerase catalytic subunit (475 aa).

The protein belongs to the poxviridae poly(A) polymerase catalytic subunit family. Highly divergent.

The protein localises to the virion. It carries out the reaction RNA(n) + ATP = RNA(n)-3'-adenine ribonucleotide + diphosphate. In terms of biological role, polymerase that creates the 3'-poly(A) tail of mRNA's. The polypeptide is Putative poly(A) polymerase catalytic subunit (Ornithodoros (relapsing fever ticks)).